The primary structure comprises 154 residues: MYAVVQVRGVVNTRKDIKDTLKMLRLHHINHCVLVADTPENLGMIRKVKDYVAYGEVDAATLETILKTRGRVIGDDPLTDEYIKSNSSTYSSIVEFAQALAKGESRLRDIPGLKPVLRLHPPRKGYKTTKRTFVQGGALGYYGPEINTLLYKMR.

The protein belongs to the universal ribosomal protein uL30 family. As to quaternary structure, part of the 50S ribosomal subunit.

The protein is Large ribosomal subunit protein uL30 of Methanoregula boonei (strain DSM 21154 / JCM 14090 / 6A8).